A 379-amino-acid polypeptide reads, in one-letter code: Nucleosome assembly protein 1;2 (379 aa).

The stretch at 26–80 (VNALKNKLQNLAGQHSDVLENLTPPVRKRVEFLREIQNQYDEMEAKFFEERAALE) forms a coiled coil. Residue Ser-41 is modified to Phosphoserine. The short motif at 47–62 (LTPPVRKRVEFLREIQ) is the Nuclear export signal element. The Nuclear localization signal signature appears at 222 to 227 (KKKPKK). The segment at 298–379 (AVEADDLDIE…GERPPECKQQ (82 aa)) is disordered. Positions 299–342 (VEADDLDIEDDDDEIDEDDDEEDEEDDEDDEEEDDEDDDEEEEA) are enriched in acidic residues. The span at 347–360 (KSKKKSSAGHKKAG) shows a compositional bias: basic residues. Position 376 is a cysteine methyl ester (Cys-376). A lipid anchor (S-farnesyl cysteine) is attached at Cys-376. Residues 377-379 (KQQ) constitute a propeptide, removed in mature form.

The protein belongs to the nucleosome assembly protein (NAP) family. In terms of assembly, can form homomeric and heteromeric protein complexes with NAP1;1, NAP1;3 and NAP1;4. Binds histone H2A. As to expression, ubiquitous.

It localises to the nucleus. It is found in the cytoplasm. Functionally, may modulate chromatin structure by regulation of nucleosome assembly/disassembly. May function in nucleotide excision repair (NER). Involved in somatic homologous recombination. The protein is Nucleosome assembly protein 1;2 (NAP1;2) of Arabidopsis thaliana (Mouse-ear cress).